Consider the following 217-residue polypeptide: Oxygen regulatory protein NreC (217 aa).

One can recognise a Response regulatory domain in the interval K2–Y119. Position 53 is a 4-aspartylphosphate (D53). In terms of domain architecture, HTH luxR-type spans T148–K213. The H-T-H motif DNA-binding region spans N172 to T191.

Post-translationally, phosphorylated by NreB.

Its subcellular location is the cytoplasm. In terms of biological role, member of the two-component regulatory system NreB/NreC involved in the control of dissimilatory nitrate/nitrite reduction in response to oxygen. Phosphorylated NreC binds to a GC-rich palindromic sequence at the promoters of the nitrate (narGHJI) and nitrite (nir) reductase operons, as well as the putative nitrate transporter gene narT, and activates their expression. This chain is Oxygen regulatory protein NreC (nreC), found in Staphylococcus haemolyticus (strain JCSC1435).